Consider the following 443-residue polypeptide: EP1-like glycoprotein 4 (443 aa).

Residues 1 to 22 form the signal peptide; sequence MEFSTTLALFFTLSIFLVGAQA. The Bulb-type lectin domain occupies 29 to 159; sequence QFRVVNEGGY…NGKFVWQSFD (131 aa). N-linked (GlcNAc...) asparagine glycosylation is found at Asn-66, Asn-102, Asn-258, and Asn-269. A WD repeat occupies 254–296; that stretch reads GSQFNVSTFLSRPKHNATLSFLRLESDGNIRVWSYSTLATSTA. The region spanning 356-433 is the PAN domain; the sequence is CDPKTFHYFK…TSLVAYVKAP (78 aa). 2 disulfides stabilise this stretch: Cys-387–Cys-409 and Cys-391–Cys-397. Asn-434 carries an N-linked (GlcNAc...) asparagine glycan.

The protein resides in the secreted. The protein localises to the cell wall. The chain is EP1-like glycoprotein 4 from Arabidopsis thaliana (Mouse-ear cress).